The primary structure comprises 596 residues: tRNA(Met) cytidine acetyltransferase TmcA (596 aa).

Residues Q138, 160–169 (GRGKSTLAGK), and R285 each bind ATP. Residues 328–481 (SDLRRLFDAQ…SGYHSAMMLY (154 aa)) form the N-acetyltransferase domain. Acetyl-CoA is bound by residues 406 to 408 (IAV) and 413 to 419 (QKQGIGK).

The protein belongs to the RNA cytidine acetyltransferase family. TmcA subfamily.

The protein localises to the cytoplasm. The enzyme catalyses cytidine(34) in elongator tRNA(Met) + acetyl-CoA + ATP + H2O = N(4)-acetylcytidine(34) in elongator tRNA(Met) + ADP + phosphate + CoA + H(+). In terms of biological role, catalyzes the formation of N(4)-acetylcytidine (ac(4)C) at the wobble position of tRNA(Met), by using acetyl-CoA as an acetyl donor and ATP (or GTP). This Actinobacillus pleuropneumoniae serotype 5b (strain L20) protein is tRNA(Met) cytidine acetyltransferase TmcA.